The following is a 120-amino-acid chain: Small ribosomal subunit protein bS16 (120 aa).

The interval 81-120 (GLAKRPARNNPQKAEPGEKSKERAAKRAEKAAAPAEDAAA) is disordered. Residues 95 to 110 (EPGEKSKERAAKRAEK) show a composition bias toward basic and acidic residues. Low complexity predominate over residues 111 to 120 (AAAPAEDAAA).

It belongs to the bacterial ribosomal protein bS16 family.

In Methylorubrum populi (strain ATCC BAA-705 / NCIMB 13946 / BJ001) (Methylobacterium populi), this protein is Small ribosomal subunit protein bS16.